Here is a 381-residue protein sequence, read N- to C-terminus: Creatine kinase B-type (381 aa).

At Ser4 the chain carries Phosphoserine. One can recognise a Phosphagen kinase N-terminal domain in the interval 11–98 (KLRFPAEDEF…FDPIIEDRHG (88 aa)). A Phosphothreonine modification is found at Thr35. Lys45 participates in a covalent cross-link: Glycyl lysine isopeptide (Lys-Gly) (interchain with G-Cter in ubiquitin). Val72 is a binding site for creatine. A compositionally biased stretch (basic and acidic residues) spans 96-110 (RHGGYKPSDEHKTDL). Residues 96-122 (RHGGYKPSDEHKTDLNPDNLQGGDDLD) form a disordered region. Residues Lys101 and Lys107 each participate in a glycyl lysine isopeptide (Lys-Gly) (interchain with G-Cter in ubiquitin) cross-link. A Phosphotyrosine modification is found at Tyr125. The 243-residue stretch at 125–367 (YVLSSRVRTG…KLLIEMEQRL (243 aa)) folds into the Phosphagen kinase C-terminal domain. Residues 128–132 (SSRVR), Arg130, Arg132, and His191 each bind ATP. An internal MTS-like signal region spans residues 130–138 (RVRTGRSIR). Phosphoserine is present on Ser199. Residue Glu232 participates in creatine binding. Arg236 provides a ligand contact to ATP. Tyr269 carries the 3'-nitrotyrosine modification. Position 285 (Ser285) interacts with creatine. Residue Arg292 participates in ATP binding. Ser309 carries the phosphoserine modification. ATP contacts are provided by residues Arg320, 320-325 (RGTGGV), and Asp335. Thr322 bears the Phosphothreonine mark. Residue Lys381 forms a Glycyl lysine isopeptide (Lys-Gly) (interchain with G-Cter in ubiquitin) linkage.

The protein belongs to the ATP:guanido phosphotransferase family. Dimer of identical or non-identical chains, which can be either B (brain type) or M (muscle type). With MM being the major form in skeletal muscle and myocardium, MB existing in myocardium, and BB existing in many tissues, especially brain. Interacts with SLC12A6 (via C-terminus); the interaction may be required for SLC12A6 potassium-chloride cotransport activity. Ubiquitinated by the ECS(ASB9) complex, leading to its degradation by the proteasome.

It is found in the cytoplasm. It localises to the cytosol. The protein resides in the mitochondrion. Its subcellular location is the cell membrane. The catalysed reaction is creatine + ATP = N-phosphocreatine + ADP + H(+). Its function is as follows. Reversibly catalyzes the transfer of phosphate between ATP and various phosphogens (e.g. creatine phosphate). Creatine kinase isoenzymes play a central role in energy transduction in tissues with large, fluctuating energy demands, such as skeletal muscle, heart, brain and spermatozoa. Acts as a key regulator of adaptive thermogenesis as part of the futile creatine cycle: localizes to the mitochondria of thermogenic fat cells and acts by mediating phosphorylation of creatine to initiate a futile cycle of creatine phosphorylation and dephosphorylation. During the futile creatine cycle, creatine and N-phosphocreatine are in a futile cycle, which dissipates the high energy charge of N-phosphocreatine as heat without performing any mechanical or chemical work. In Homo sapiens (Human), this protein is Creatine kinase B-type.